The following is a 404-amino-acid chain: Cysteine desulfurase IscS (404 aa).

Residues alanine 75 to threonine 76, asparagine 155, glutamine 183, and serine 203 to histidine 205 each bind pyridoxal 5'-phosphate. Lysine 206 bears the N6-(pyridoxal phosphate)lysine mark. Threonine 243 lines the pyridoxal 5'-phosphate pocket. The active-site Cysteine persulfide intermediate is cysteine 328. Cysteine 328 provides a ligand contact to [2Fe-2S] cluster.

It belongs to the class-V pyridoxal-phosphate-dependent aminotransferase family. NifS/IscS subfamily. As to quaternary structure, homodimer. Forms a heterotetramer with IscU, interacts with other sulfur acceptors. Pyridoxal 5'-phosphate serves as cofactor.

The protein resides in the cytoplasm. It catalyses the reaction (sulfur carrier)-H + L-cysteine = (sulfur carrier)-SH + L-alanine. It participates in cofactor biosynthesis; iron-sulfur cluster biosynthesis. In terms of biological role, master enzyme that delivers sulfur to a number of partners involved in Fe-S cluster assembly, tRNA modification or cofactor biosynthesis. Catalyzes the removal of elemental sulfur atoms from cysteine to produce alanine. Functions as a sulfur delivery protein for Fe-S cluster synthesis onto IscU, an Fe-S scaffold assembly protein, as well as other S acceptor proteins. This chain is Cysteine desulfurase IscS, found in Pasteurella multocida (strain Pm70).